The chain runs to 205 residues: Small ribosomal subunit protein uS5 (205 aa).

The disordered stretch occupies residues 1-25 (MSGAQRGQRGGERRGGRDDRRGQGA). Residues 9–24 (RGGERRGGRDDRRGQG) are compositionally biased toward basic and acidic residues. Residues 30–93 (YIERVVAINR…EEAKKHFFRV (64 aa)) form the S5 DRBM domain.

It belongs to the universal ribosomal protein uS5 family. As to quaternary structure, part of the 30S ribosomal subunit. Contacts proteins S4 and S8.

Functionally, with S4 and S12 plays an important role in translational accuracy. Located at the back of the 30S subunit body where it stabilizes the conformation of the head with respect to the body. This chain is Small ribosomal subunit protein uS5, found in Nocardioides sp. (strain ATCC BAA-499 / JS614).